The following is a 435-amino-acid chain: Elongation factor 1-alpha (435 aa).

Residues 6–231 enclose the tr-type G domain; it reads KVHINLVVIG…DALEPPKRPV (226 aa). Residues 15–22 are G1; that stretch reads GHVDSGKS. GTP is bound at residue 15 to 22; that stretch reads GHVDSGKS. The interval 71–75 is G2; it reads GITID. Positions 92–95 are G3; that stretch reads DAPG. GTP is bound by residues 92 to 96 and 154 to 157; these read DAPGH and NKMD. The interval 154–157 is G4; sequence NKMD. Residues 195–197 are G5; sequence SGF.

It belongs to the TRAFAC class translation factor GTPase superfamily. Classic translation factor GTPase family. EF-Tu/EF-1A subfamily.

It localises to the cytoplasm. Its function is as follows. This protein promotes the GTP-dependent binding of aminoacyl-tRNA to the A-site of ribosomes during protein biosynthesis. The chain is Elongation factor 1-alpha from Tetrahymena pyriformis.